Reading from the N-terminus, the 294-residue chain is Putative isocitrate dehydrogenase [NAD] subunit-like 4 (294 aa).

This sequence belongs to the isocitrate and isopropylmalate dehydrogenases family.

In terms of biological role, performs an essential role in the oxidative function of the citric acid cycle. The protein is Putative isocitrate dehydrogenase [NAD] subunit-like 4 (IDH4) of Arabidopsis thaliana (Mouse-ear cress).